The primary structure comprises 1381 residues: DNA-directed RNA polymerase subunit beta' (1381 aa).

Zn(2+) is bound by residues Cys70, Cys72, Cys85, and Cys88. 3 residues coordinate Mg(2+): Asp461, Asp463, and Asp465. Positions 801, 875, 882, and 885 each coordinate Zn(2+). Residues 1362–1381 (VEIEGDENSNKKSLDMHAAN) form a disordered region. The span at 1369–1381 (NSNKKSLDMHAAN) shows a compositional bias: basic and acidic residues.

This sequence belongs to the RNA polymerase beta' chain family. In terms of assembly, the RNAP catalytic core consists of 2 alpha, 1 beta, 1 beta' and 1 omega subunit. When a sigma factor is associated with the core the holoenzyme is formed, which can initiate transcription. Mg(2+) is required as a cofactor. Zn(2+) serves as cofactor.

It catalyses the reaction RNA(n) + a ribonucleoside 5'-triphosphate = RNA(n+1) + diphosphate. Functionally, DNA-dependent RNA polymerase catalyzes the transcription of DNA into RNA using the four ribonucleoside triphosphates as substrates. The protein is DNA-directed RNA polymerase subunit beta' of Syntrophus aciditrophicus (strain SB).